A 648-amino-acid chain; its full sequence is Nucleoside triphosphatase I (648 aa).

Residues 48 to 212 (FIGLKNLNSM…NNLIGLLRPN (165 aa)) form the Helicase ATP-binding domain. 61–68 (WDTGMGKT) is a binding site for ATP. A DEXH box motif is present at residues 150–153 (DEVH). Positions 378-541 (YIETCKIILN…KINVIFDLLK (164 aa)) constitute a Helicase C-terminal domain. Residues 467 to 533 (DIIILDMPWN…DIIKDKQGKI (67 aa)) form a binding to the cap-specific mRNA (nucleoside-2'-O-)-methyltransferase region.

Belongs to the helicase family. NPH I subfamily. In terms of assembly, monomer. Interacts (via C-terminus) with RAP94 (via N-terminus). Interacts with the cap-specific mRNA (nucleoside-2'-O-)-methyltransferase.

Its subcellular location is the virion. The enzyme catalyses a ribonucleoside 5'-triphosphate + H2O = a ribonucleoside 5'-diphosphate + phosphate + H(+). Its function is as follows. DNA-dependent ATPase required for providing the needed energy to achieve the termination of early transcripts. Acts in concert with the RAP94 subunit of the virion RNA polymerase and the capping enzyme/VTF to catalyze release of UUUUUNU-containing nascent RNA from the elongation complex. NPH-I must bind ssDNA in order to exhibit ATPase activity. The sequence is that of Nucleoside triphosphatase I (NPH1) from Amsacta (AmEPV).